The chain runs to 133 residues: Large ribosomal subunit protein uL22 (133 aa).

Belongs to the universal ribosomal protein uL22 family. In terms of assembly, part of the 50S ribosomal subunit.

This protein binds specifically to 23S rRNA; its binding is stimulated by other ribosomal proteins, e.g. L4, L17, and L20. It is important during the early stages of 50S assembly. It makes multiple contacts with different domains of the 23S rRNA in the assembled 50S subunit and ribosome. Functionally, the globular domain of the protein is located near the polypeptide exit tunnel on the outside of the subunit, while an extended beta-hairpin is found that lines the wall of the exit tunnel in the center of the 70S ribosome. This Granulibacter bethesdensis (strain ATCC BAA-1260 / CGDNIH1) protein is Large ribosomal subunit protein uL22.